The sequence spans 63 residues: Large ribosomal subunit protein uL29 (63 aa).

This sequence belongs to the universal ribosomal protein uL29 family.

The polypeptide is Large ribosomal subunit protein uL29 (Shewanella pealeana (strain ATCC 700345 / ANG-SQ1)).